Here is a 563-residue protein sequence, read N- to C-terminus: MDFGSLETVVANSAFIAARGSFDGSSSQPSRDKKYLAKLKLPPLSKCESLRDSLSLEFESVCLEQPIGKKLFQQFLQSAEKHLPALELWKDIEDYDTADNDLQPQKAQTILAQYLDPQAKLFCSFLDEGIVAKFKEGPVEIQDGLFQPLLQATLAHLGQAPFQEYLGSLYFLRFLQWKWLEAQPMGEDWFLDFRVLGKGGFGEVSACQMKATGKLYACKKLNKKRLKKRKGYQGAMVEKKILMKVHSRFIVSLAYAFETKADLCLVMTIMNGGDIRYHIYNVNEENPGFPEPRALFYTAQIICGLEHLHQRRIVYRDLKPENVLLDNDGNVRISDLGLAVELLDGQSKTKGYAGTPGFMAPELLQGEEYDFSVDYFALGVTLYEMIAARGPFRARGEKVENKELKHRIISEPVKYPDKFSQASKDFCEALLEKDPEKRLGFRDETCDKLRAHPLFKDLNWRQLEAGMLMPPFIPDSKTVYAKDIQDVGAFSTVKGVAFDKTDTEFFQEFATGNCPIPWQEEMIETGIFGELNVWRSDGQMPDDMKGISGGSSSSSKSGMCLVS.

The interaction with RCVRN stretch occupies residues 1–15; that stretch reads MDFGSLETVVANSAF. Positions 1 to 189 are N-terminal; it reads MDFGSLETVV…LEAQPMGEDW (189 aa). S5 bears the Phosphoserine mark. Residue T8 is modified to Phosphothreonine. At S21 the chain carries Phosphoserine; by PKA and autocatalysis. The RGS domain occupies 58 to 175; the sequence is FESVCLEQPI…LGSLYFLRFL (118 aa). The 266-residue stretch at 190–455 folds into the Protein kinase domain; that stretch reads FLDFRVLGKG…CDKLRAHPLF (266 aa). ATP is bound by residues 196-204 and K219; that span reads LGKGGFGEV. Catalysis depends on D317, which acts as the Proton acceptor. The 66-residue stretch at 456–521 folds into the AGC-kinase C-terminal domain; sequence KDLNWRQLEA…GNCPIPWQEE (66 aa). Residues 456–563 are C-terminal; the sequence is KDLNWRQLEA…SSKSGMCLVS (108 aa). S491 carries the post-translational modification Phosphoserine; by autocatalysis. Residue T492 is modified to Phosphothreonine; by autocatalysis. The tract at residues 539-563 is disordered; it reads QMPDDMKGISGGSSSSSKSGMCLVS. A compositionally biased stretch (low complexity) spans 550–563; that stretch reads GSSSSSKSGMCLVS. At C560 the chain carries Cysteine methyl ester. Residue C560 is the site of S-farnesyl cysteine attachment. A propeptide spans 561–563 (removed in mature form); that stretch reads LVS.

The protein belongs to the protein kinase superfamily. AGC Ser/Thr protein kinase family. GPRK subfamily. In terms of assembly, interacts (via N-terminus) with RCVRN (via C-terminus); the interaction is Ca(2+)-dependent. Interacts (when prenylated) with PDE6D; this promotes release from membranes. May form a complex composed of RHO, GRK1 and RCVRN in a Ca(2+)-dependent manner; RCVRN prevents the interaction between GRK1 and RHO. Post-translationally, autophosphorylated, Ser-21 is a minor site of autophosphorylation compared to Ser-491 and Thr-492. Phosphorylation at Ser-21 is regulated by light and activated by cAMP. In terms of processing, farnesylation is required for full activity. Retinal-specific. Expressed in rods and cones cells.

It is found in the membrane. The protein localises to the cell projection. It localises to the cilium. The protein resides in the photoreceptor outer segment. The enzyme catalyses L-threonyl-[rhodopsin] + ATP = O-phospho-L-threonyl-[rhodopsin] + ADP + H(+). It carries out the reaction L-seryl-[rhodopsin] + ATP = O-phospho-L-seryl-[rhodopsin] + ADP + H(+). Its activity is regulated as follows. Inhibited by RCVRN, which prevents the interaction between GRK1 and RHO. Inhibition is calcium-dependent. Inhibited by phosphorylation of Ser-21. Functionally, retina-specific kinase involved in the signal turnoff via phosphorylation of rhodopsin (RHO), the G protein- coupled receptor that initiates the phototransduction cascade. This rapid desensitization is essential for scotopic vision and permits rapid adaptation to changes in illumination. May play a role in the maintenance of the outer nuclear layer in the retina. The protein is Rhodopsin kinase GRK1 of Homo sapiens (Human).